A 443-amino-acid polypeptide reads, in one-letter code: Glutamine synthetase (443 aa).

Residues 16–101 (NGVKFIRLQF…LICDVYKPDG (86 aa)) form the GS beta-grasp domain. Residues 108 to 443 (PRHVLKRANA…WELENYLNKY (336 aa)) enclose the GS catalytic domain. Residues Glu-131 and Glu-133 each contribute to the Mg(2+) site. ATP is bound at residue Glu-183. Positions 188 and 195 each coordinate Mg(2+). Residues 239–240 (NG) and Gly-240 each bind L-glutamate. His-244 is a Mg(2+) binding site. Ser-248 contacts ATP. L-glutamate is bound by residues Arg-297, Glu-303, and Arg-315. ATP contacts are provided by Arg-315 and Arg-320. Residue Glu-332 participates in Mg(2+) binding. Arg-334 serves as a coordination point for L-glutamate.

The protein belongs to the glutamine synthetase family. Oligomer of 12 subunits arranged in the form of two hexagons. In its feedback-inhibited form, interacts with TnrA in order to block its DNA-binding activity. It depends on Mg(2+) as a cofactor.

The protein resides in the cytoplasm. It catalyses the reaction L-glutamate + NH4(+) + ATP = L-glutamine + ADP + phosphate + H(+). With respect to regulation, inhibited by glutamine. Functionally, glutamine synthetase (GS) is an unusual multitasking protein that functions as an enzyme, a transcription coregulator, and a chaperone in ammonium assimilation and in the regulation of genes involved in nitrogen metabolism. It catalyzes the ATP-dependent biosynthesis of glutamine from glutamate and ammonia. Feedback-inhibited GlnA also interacts with and regulates the activity of the transcriptional regulator TnrA. During nitrogen limitation, TnrA is in its DNA-binding active state and turns on the transcription of genes required for nitrogen assimilation. Under conditions of nitrogen excess, feedback-inhibited GlnA forms a stable complex with TnrA, which inhibits its DNA-binding activity. In contrast, feedback-inhibited GlnA acts as a chaperone to stabilize the DNA-binding activity of GlnR, which represses the transcription of nitrogen assimilation genes. This is Glutamine synthetase from Clostridium saccharobutylicum.